The chain runs to 251 residues: Protein unc-119 homolog B (251 aa).

A compositionally biased stretch (polar residues) spans 1–13 (MSGSNPKAATAGS). The disordered stretch occupies residues 1-56 (MSGSNPKAATAGSQAGPGGLVAGKEEKKKAGGGVLNRLKARRQGPPHTPDDGSGAA). Residue Ser2 is modified to N-acetylserine. Lys24 carries the post-translational modification N6-acetyllysine. Residue Tyr142 participates in tetradecanoate binding.

The protein belongs to the PDE6D/unc-119 family. Found in a complex with ARL3, RP2 and UNC119B; RP2 induces hydrolysis of GTP ARL3 in the complex, leading to the release of UNC119B. Interacts with NPHP3 (when myristoylated). Interacts with CYS1 (when myristoylated). Interacts with MACIR; interaction only takes place when UNC119B is not liganded with myristoylated proteins.

The protein resides in the cell projection. It localises to the cilium. In terms of biological role, myristoyl-binding protein that acts as a cargo adapter: specifically binds the myristoyl moiety of a subset of N-terminally myristoylated proteins and is required for their localization. Binds myristoylated NPHP3 and plays a key role in localization of NPHP3 to the primary cilium membrane. Does not bind all myristoylated proteins. Probably plays a role in trafficking proteins in photoreceptor cells. The protein is Protein unc-119 homolog B (Unc119b) of Mus musculus (Mouse).